Here is a 90-residue protein sequence, read N- to C-terminus: MNDSVKTSLKRTLVGKVVSNKMDKTVTVLVEHRVKHPIYGKYVVRSKKYHAHDEANTYNEGDLVEIQETRPLSKTKAWTVSRLVEAARII.

It belongs to the universal ribosomal protein uS17 family. In terms of assembly, part of the 30S ribosomal subunit.

One of the primary rRNA binding proteins, it binds specifically to the 5'-end of 16S ribosomal RNA. The chain is Small ribosomal subunit protein uS17 from Paraburkholderia phymatum (strain DSM 17167 / CIP 108236 / LMG 21445 / STM815) (Burkholderia phymatum).